The following is a 77-amino-acid chain: NADH dehydrogenase [ubiquinone] 1 alpha subcomplex subunit 3 (77 aa).

Residues 23–45 (IVGGSALALAGIVMATIGVANYY) traverse the membrane as a helical segment.

This sequence belongs to the complex I NDUFA3 subunit family. In terms of assembly, complex I is composed of 43 different subunits.

It localises to the mitochondrion inner membrane. Its subcellular location is the cytoplasm. It is found in the myofibril. The protein localises to the sarcomere. The protein resides in the z line. Accessory subunit of the mitochondrial membrane respiratory chain NADH dehydrogenase (Complex I), that is believed not to be involved in catalysis. Complex I functions in the transfer of electrons from NADH to the respiratory chain. The immediate electron acceptor for the enzyme is believed to be ubiquinone. Required for the maintenance of muscle integrity and for cell proliferation in the wing imaginal disc epithelium, possibly by interacting with the chaperone-assisted selective autophagy (CASA) pathway. This Drosophila melanogaster (Fruit fly) protein is NADH dehydrogenase [ubiquinone] 1 alpha subcomplex subunit 3.